We begin with the raw amino-acid sequence, 1045 residues long: E3 ubiquitin-protein ligase Topors (1045 aa).

Positions 1 to 35 (MGSQPPLGSPLSREEGEAPPPAPASEGRRRSRRVR) are disordered. The segment at 1–195 (MGSQPPLGSP…RERNASVYSP (195 aa)) is E3 ubiquitin-protein ligase activity. A required for DNA-binding region spans residues 51 to 374 (ELAASAPARP…MAAFDQHANY (324 aa)). Residues Lys-73, Lys-76, Lys-83, and Lys-88 each participate in a glycyl lysine isopeptide (Lys-Gly) (interchain with G-Cter in SUMO2) cross-link. Ser-98 carries the phosphoserine modification. The RING-type zinc finger occupies 103–142 (CPICLDRFDNVSYLDRCLHKFCFRCVQEWSKNKAECPLCK). A Glycyl lysine isopeptide (Lys-Gly) (interchain with G-Cter in SUMO2) cross-link involves residue Lys-159. Ser-194 bears the Phosphoserine mark. A Glycyl lysine isopeptide (Lys-Gly) (interchain with G-Cter in SUMO2) cross-link involves residue Lys-249. The interval 437–574 (SLLNTSDSSD…STSLSSPRNL (138 aa)) is required for sumoylation and localization to discrete nuclear foci. The interaction with SUMO1 stretch occupies residues 437–654 (SLLNTSDSSD…RSRTRDSSWS (218 aa)). The interval 442–475 (SDSSDEELVTGGATSQIQGVQTNDDLNNDSDDSS) is disordered. Polar residues predominate over residues 453 to 463 (GATSQIQGVQT). The interaction with p53/TP53 stretch occupies residues 456 to 731 (SQIQGVQTND…RRTLSRAHYS (276 aa)). An interaction with TOP1 region spans residues 456 to 882 (SQIQGVQTND…GKATDTTKHH (427 aa)). Phosphoserine is present on Ser-499. Positions 511 to 692 (ETVKTQEQEQ…RSRNRDRYYL (182 aa)) are disordered. The span at 521–534 (SYSSGDSDVSRCSS) shows a compositional bias: low complexity. Residues 539–565 (LGKDEQINKGHCDSSTRIKSKKEEKRS) show a composition bias toward basic and acidic residues. A Glycyl lysine isopeptide (Lys-Gly) (interchain with G-Cter in SUMO) cross-link involves residue Lys-560. Positions 566 to 578 (TSLSSPRNLNSSV) are enriched in polar residues. Ser-585 is modified (phosphoserine). Composition is skewed to basic residues over residues 588–597 (NHRHRKRGRS), 613–630 (KNHRKHHGKKRMKSKRSR), and 637–647 (PRGRRDKKRSR). Residues 654–669 (SRRSQTLSLSSESTSR) show a composition bias toward low complexity. Residue Lys-701 forms a Glycyl lysine isopeptide (Lys-Gly) (interchain with G-Cter in SUMO2) linkage. The disordered stretch occupies residues 713-936 (RDGYESSYRR…DNSGPQDPLQ (224 aa)). Ser-718 is modified (phosphoserine; by PLK1). Residues 721–730 (RRRTLSRAHY) are compositionally biased toward basic residues. The span at 731 to 747 (SRQSSSPEFRVQSFSER) shows a compositional bias: polar residues. A Phosphoserine modification is found at Ser-734. 2 stretches are compositionally biased toward basic and acidic residues: residues 755–766 (NHSERKYYYYER) and 816–825 (FASKAKDSHY). Glycyl lysine isopeptide (Lys-Gly) (interchain with G-Cter in SUMO2) cross-links involve residues Lys-819 and Lys-837. Residues 854–863 (KHKRRKRKTR) are compositionally biased toward basic residues. Positions 854–917 (KHKRRKRKTR…ITIDSDSDKD (64 aa)) are interaction with UBE2I. Residues Ser-864 and Ser-866 each carry the phosphoserine modification. The span at 880–897 (KHHKKKKKKHKKKHKKHH) shows a compositional bias: basic residues. A phosphoserine mark is found at Ser-912, Ser-914, and Ser-1028. Over residues 913 to 923 (DSDKDSEVKED) the composition is skewed to basic and acidic residues.

Interacts with PARK7/DJ-1. Interacts with TOP1. Interacts with p53/TP53; can both ubiquitinate and sumoylate p53/TP53. Interacts with the SUMO1 conjugating enzyme UBE2I. Interacts with SUMO1. Interacts with NKX3-1; polyubiquitinates NKX3-1 and induces its proteasomal degradation. Interacts with SIN3A; sumoylates SIN3A. Interacts with IKBKE; induced by DNA damage. Post-translationally, phosphorylation at Ser-98 regulates the E3 ubiquitin-protein ligase activity but not the SUMO1-protein ligase activity. Phosphorylation at Ser-718 increases the E3 ubiquitin-protein ligase activity versus the SUMO1-protein ligase activity resulting in increased p53/TP53 ubiquitination and degradation. In terms of processing, sumoylated. Expressed at highest levels in testis and at lower levels in adrenal gland, bone marrow, brain, colon, heart, kidney, liver, muscle, ovary, pancreas, placenta, prostate, skeletal muscle, skin, small intestine, spleen, stomach, testis, thymus, thyroid and uterus. Expressed in the alveolar epithelium of the lung. Expression is commonly decreased in colon adenocarcinomas and lung cancers.

The protein localises to the nucleus. It is found in the PML body. It carries out the reaction S-ubiquitinyl-[E2 ubiquitin-conjugating enzyme]-L-cysteine + [acceptor protein]-L-lysine = [E2 ubiquitin-conjugating enzyme]-L-cysteine + N(6)-ubiquitinyl-[acceptor protein]-L-lysine.. Its function is as follows. Functions as an E3 ubiquitin-protein ligase and as an E3 SUMO1-protein ligase. Probable tumor suppressor involved in cell growth, cell proliferation and apoptosis that regulates p53/TP53 stability through ubiquitin-dependent degradation. May regulate chromatin modification through sumoylation of several chromatin modification-associated proteins. May be involved in DNA damage-induced cell death through IKBKE sumoylation. In Homo sapiens (Human), this protein is E3 ubiquitin-protein ligase Topors (TOPORS).